The primary structure comprises 319 residues: Replication factor C small subunit (319 aa).

45–52 (GPPGTGKT) serves as a coordination point for ATP.

The protein belongs to the activator 1 small subunits family. RfcS subfamily. Heteropentamer composed of four small subunits (RfcS) and one large subunit (RfcL). Both subunits interact with PCNA.

Functionally, part of the RFC clamp loader complex which loads the PCNA sliding clamp onto DNA. The complex possesses DNA-dependent ATPase activity which is further stimulated by PCNA. This chain is Replication factor C small subunit (rfcS), found in Archaeoglobus fulgidus (strain ATCC 49558 / DSM 4304 / JCM 9628 / NBRC 100126 / VC-16).